The chain runs to 35 residues: Thaumatin-like protein 6 (35 aa).

Belongs to the thaumatin family.

This is Thaumatin-like protein 6 from Glebionis coronaria (Crown daisy).